The primary structure comprises 132 residues: Translation initiation factor 5A (132 aa).

Residue K36 is modified to Hypusine.

The protein belongs to the eIF-5A family.

It is found in the cytoplasm. Its function is as follows. Functions by promoting the formation of the first peptide bond. The polypeptide is Translation initiation factor 5A (eIF5A) (Desulfurococcus amylolyticus (strain DSM 18924 / JCM 16383 / VKM B-2413 / 1221n) (Desulfurococcus kamchatkensis)).